A 519-amino-acid polypeptide reads, in one-letter code: ATP synthase subunit beta (519 aa).

Residues 1–26 (MAKAATPKRAPARAAAIPAAATPAAK) show a composition bias toward low complexity. The segment at 1–40 (MAKAATPKRAPARAAAIPAAATPAAKPAKRASTRSAAARS) is disordered. Residue 197–204 (GGAGVGKT) participates in ATP binding.

The protein belongs to the ATPase alpha/beta chains family. As to quaternary structure, F-type ATPases have 2 components, CF(1) - the catalytic core - and CF(0) - the membrane proton channel. CF(1) has five subunits: alpha(3), beta(3), gamma(1), delta(1), epsilon(1). CF(0) has three main subunits: a(1), b(2) and c(9-12). The alpha and beta chains form an alternating ring which encloses part of the gamma chain. CF(1) is attached to CF(0) by a central stalk formed by the gamma and epsilon chains, while a peripheral stalk is formed by the delta and b chains.

The protein localises to the cell inner membrane. The enzyme catalyses ATP + H2O + 4 H(+)(in) = ADP + phosphate + 5 H(+)(out). Produces ATP from ADP in the presence of a proton gradient across the membrane. The catalytic sites are hosted primarily by the beta subunits. The chain is ATP synthase subunit beta from Chelativorans sp. (strain BNC1).